The chain runs to 308 residues: MPGRELAPRQNVEFQTLDGLTLRGWLFPAQSRGPAVIITPGFNCVKEMFVSEVAESFQHSDVTALVYDPRTLGDSGGLPRNNIDPLAQVSDYSDALTFLKTLPIVDQTNISFWGMSFSALVALNAAALDKRARCCIAVCPLTGMQPEPDMLPKVLARCMQDRESQVVGNPPVTISVLTEQGRNPAGMGIGADKMEYDYMVNAKFRGAPNYENRTTLQSYYKMMAWQPFEIMKYLSKTRVLMIIPENDTISPADKQQVLFDGLPEPKTAHIAKGKGHLDVLSGADYEILAEMQAYFIKGPRGKGNAPSA.

It belongs to the polyketide transferase af380 family.

It functions in the pathway mycotoxin biosynthesis. Thiohydrolase; part of the gene cluster that mediates the biosynthesis of brefeldin A (BFA), a protein transport inhibitor that shows antiviral, antifungal, and antitumor properties. The proposed biosynthesis of BFA involves formation of an acyclic polyketide chain that is differentially tailored throughout the backbone. The highly reducing polyketide synthase Bref-PKS is proposed to synthesize the precisely reduced octaketide precursor, which could then be directly offloaded by the thiohydrolase enzyme Bref-TH followed by a cytochrome P450 monooxygenase-mediated formation of the cyclopentane ring and macrocyclization to afford 7-deoxy BFA. Alternatively, the first ring annulation can also occur on the ACP-tethered intermediate before the thiohydrolase release and lactonization. The C7-hydroxylation by another cytochrome P450 monooxygenase is believed to be the final step in the process to obtain the final structure of BFA. In addition to the HRPKS Bref-PKS and the thiohydrolase Bref-TH, the brefeldin A biosynthesis cluster contains 4 cytochrome p450 monooxygenases (called orf3 to orf6), as well a the probable cluster-specific transcription regulator orf8. This chain is Thiohydrolase, found in Eupenicillium brefeldianum (Penicillium brefeldianum).